Consider the following 129-residue polypeptide: Small ribosomal subunit protein uS11 (129 aa).

Belongs to the universal ribosomal protein uS11 family. Part of the 30S ribosomal subunit. Interacts with proteins S7 and S18. Binds to IF-3.

Located on the platform of the 30S subunit, it bridges several disparate RNA helices of the 16S rRNA. Forms part of the Shine-Dalgarno cleft in the 70S ribosome. This Brucella abortus (strain S19) protein is Small ribosomal subunit protein uS11.